We begin with the raw amino-acid sequence, 119 residues long: Large ribosomal subunit protein bL20 (119 aa).

This sequence belongs to the bacterial ribosomal protein bL20 family.

In terms of biological role, binds directly to 23S ribosomal RNA and is necessary for the in vitro assembly process of the 50S ribosomal subunit. It is not involved in the protein synthesizing functions of that subunit. This chain is Large ribosomal subunit protein bL20, found in Nitrosococcus oceani (strain ATCC 19707 / BCRC 17464 / JCM 30415 / NCIMB 11848 / C-107).